The chain runs to 276 residues: Pantothenate synthetase (276 aa).

27–34 (MGALHRGH) contributes to the ATP binding site. The active-site Proton donor is the His-34. Residue Gln-58 participates in (R)-pantoate binding. Gln-58 lines the beta-alanine pocket. Residue 147-150 (GKKD) participates in ATP binding. Gln-153 contributes to the (R)-pantoate binding site. Residues Ala-176 and 184-187 (LSSR) contribute to the ATP site.

It belongs to the pantothenate synthetase family. Homodimer.

The protein resides in the cytoplasm. It catalyses the reaction (R)-pantoate + beta-alanine + ATP = (R)-pantothenate + AMP + diphosphate + H(+). It participates in cofactor biosynthesis; (R)-pantothenate biosynthesis; (R)-pantothenate from (R)-pantoate and beta-alanine: step 1/1. Its function is as follows. Catalyzes the condensation of pantoate with beta-alanine in an ATP-dependent reaction via a pantoyl-adenylate intermediate. This Helicobacter pylori (strain P12) protein is Pantothenate synthetase.